The primary structure comprises 341 residues: THO complex subunit 6 homolog (341 aa).

7 WD repeats span residues 22 to 61, 74 to 112, 124 to 163, 166 to 205, 215 to 254, 256 to 293, and 295 to 339; these read RLHM…SSEA, AHDG…GCKE, LEVP…FTRA, GHTD…EVQT, SRPH…PTTV, PIRA…KAQV, and GSSP…AFSL. Ser-180 is modified (phosphoserine).

Belongs to the WD repeat THOC6 family. Component of the THO subcomplex, which is composed of THOC1, THOC2, THOC3, THOC5, THOC6 and THOC7. The THO subcomplex interacts with DDX39B to form the THO-DDX39B complex which multimerizes into a 28-subunit tetrameric assembly. Component of the transcription/export (TREX) complex at least composed of ALYREF/THOC4, DDX39B, SARNP/CIP29, CHTOP and the THO subcomplex; in the complex interacts with THOC5; together with THOC5 and THOC7, plays a key structural role in the oligomerization of the THO-DDX39B complex. TREX seems to have a dynamic structure involving ATP-dependent remodeling.

It is found in the nucleus. Its subcellular location is the nucleus speckle. Functionally, component of the THO subcomplex of the TREX complex which is thought to couple mRNA transcription, processing and nuclear export, and which specifically associates with spliced mRNA and not with unspliced pre-mRNA. Plays a key structural role in the oligomerization of the THO-DDX39B complex. TREX is recruited to spliced mRNAs by a transcription-independent mechanism, binds to mRNA upstream of the exon-junction complex (EJC) and is recruited in a splicing- and cap-dependent manner to a region near the 5' end of the mRNA where it functions in mRNA export to the cytoplasm via the TAP/NXF1 pathway. Plays a role in apoptosis negative control involved in brain development. This is THO complex subunit 6 homolog (Thoc6) from Rattus norvegicus (Rat).